A 404-amino-acid polypeptide reads, in one-letter code: uncharacterized protein (404 aa).

Cysteine 69, cysteine 75, cysteine 78, and cysteine 166 together coordinate [4Fe-4S] cluster. 4 residues coordinate S-adenosyl-L-methionine: glutamine 226, tyrosine 253, glutamate 274, and aspartate 334. The active-site Nucleophile is the cysteine 361.

This sequence belongs to the class I-like SAM-binding methyltransferase superfamily. RNA M5U methyltransferase family.

This is an uncharacterized protein from Treponema denticola (strain ATCC 35405 / DSM 14222 / CIP 103919 / JCM 8153 / KCTC 15104).